We begin with the raw amino-acid sequence, 984 residues long: Mast/stem cell growth factor receptor Kit (984 aa).

The signal sequence occupies residues 1-21; it reads MEYHWILLCVSLCFTFHPGDT. Residues 22–514 are Extracellular-facing; it reads KPTITPAGTY…RTISHDLFSP (493 aa). Ig-like C2-type domains are found at residues 23–97, 98–197, 203–300, 311–395, and 398–498; these read PTIT…ERAS, IYIY…LTVR, PPVI…VWLD, PVNN…ASVN, and FTIF…QAFT. Cystine bridges form between cysteine 44-cysteine 87, cysteine 129-cysteine 178, cysteine 144-cysteine 175, and cysteine 226-cysteine 284. N-linked (GlcNAc...) asparagine glycans are attached at residues asparagine 227, asparagine 260, asparagine 314, asparagine 351, asparagine 395, asparagine 448, and asparagine 476. Cysteine 421 and cysteine 487 are joined by a disulfide. Residues 515 to 535 form a helical membrane-spanning segment; the sequence is LLIGSVSAACILCLILIVLFY. Residues 536 to 984 lie on the Cytoplasmic side of the membrane; the sequence is KYMQKPKYQI…GTEPFRVQRV (449 aa). Tyrosine 558 serves as a coordination point for Mg(2+). 2 positions are modified to phosphotyrosine; by autocatalysis: tyrosine 558 and tyrosine 560. The 348-residue stretch at 579–926 folds into the Protein kinase domain; the sequence is LRFGKTLGSG…LSDTTKHIYL (348 aa). ATP is bound by residues 586–593, lysine 613, and 661–667; these read GSGAFGKV and EYCCFGD. Phosphotyrosine; by autocatalysis occurs at positions 690 and 707. Residues 711–723 show a composition bias toward low complexity; that stretch reads RPSAAGKPSSSSS. A disordered region spans residues 711-749; it reads RPSAAGKPSSSSSSEKRRSLREGSPYVEEDSESEMFDED. The span at 737 to 749 shows a compositional bias: acidic residues; that stretch reads VEEDSESEMFDED. Aspartate 781 functions as the Proton acceptor in the catalytic mechanism. Arginine 785 contributes to the ATP binding site. Mg(2+)-binding residues include asparagine 786 and aspartate 799. 2 positions are modified to phosphotyrosine; by autocatalysis: tyrosine 812 and tyrosine 925. A disordered region spans residues 936-963; that stretch reads PRGREESSTHSMASQPFNSAGNNSPPSR. The segment covering 944 to 960 has biased composition (polar residues); that stretch reads THSMASQPFNSAGNNSP.

The protein belongs to the protein kinase superfamily. Tyr protein kinase family. CSF-1/PDGF receptor subfamily. In terms of processing, ubiquitinated. Rapidly ubiquitinated after autophosphorylation induced by kitlg/scf binding, leading to internalization and degradation. Post-translationally, autophosphorylated on tyrosine residues. Phosphorylated tyrosine residues are important for interaction with specific binding partners.

It is found in the cell membrane. The catalysed reaction is L-tyrosyl-[protein] + ATP = O-phospho-L-tyrosyl-[protein] + ADP + H(+). In terms of biological role, tyrosine-protein kinase that acts as a cell-surface receptor for the cytokine kitlg/scf and plays an essential role in the regulation of cell survival and proliferation, hematopoiesis, stem cell maintenance, gametogenesis, mast cell development, migration and function, and in melanogenesis. This Takifugu rubripes (Japanese pufferfish) protein is Mast/stem cell growth factor receptor Kit (kit).